The sequence spans 570 residues: Urease subunit alpha (570 aa).

The Urease domain maps to 135–570 (GGLDIHVHFN…ELPLAQRYHL (436 aa)). Ni(2+) contacts are provided by H140, H142, and K219. K219 bears the N6-carboxylysine mark. H221 is a substrate binding site. The Ni(2+) site is built by H248 and H274. Catalysis depends on H322, which acts as the Proton donor. D362 is a Ni(2+) binding site.

Belongs to the metallo-dependent hydrolases superfamily. Urease alpha subunit family. In terms of assembly, heterotrimer of UreA (gamma), UreB (beta) and UreC (alpha) subunits. Three heterotrimers associate to form the active enzyme. Requires Ni cation as cofactor. In terms of processing, carboxylation allows a single lysine to coordinate two nickel ions.

The protein localises to the cytoplasm. The catalysed reaction is urea + 2 H2O + H(+) = hydrogencarbonate + 2 NH4(+). Its pathway is nitrogen metabolism; urea degradation; CO(2) and NH(3) from urea (urease route): step 1/1. The sequence is that of Urease subunit alpha from Natronomonas pharaonis (strain ATCC 35678 / DSM 2160 / CIP 103997 / JCM 8858 / NBRC 14720 / NCIMB 2260 / Gabara) (Halobacterium pharaonis).